The sequence spans 664 residues: Phosphomethylpyrimidine synthase (664 aa).

Residues Asn235, Met264, Tyr293, His329, 349–351 (SRG), 390–393 (DGMR), and Glu429 each bind substrate. His433 contributes to the Zn(2+) binding site. Tyr456 contacts substrate. His497 is a binding site for Zn(2+). [4Fe-4S] cluster contacts are provided by Cys577, Cys580, and Cys585.

Belongs to the ThiC family. In terms of assembly, homodimer. [4Fe-4S] cluster is required as a cofactor.

The catalysed reaction is 5-amino-1-(5-phospho-beta-D-ribosyl)imidazole + S-adenosyl-L-methionine = 4-amino-2-methyl-5-(phosphooxymethyl)pyrimidine + CO + 5'-deoxyadenosine + formate + L-methionine + 3 H(+). The protein operates within cofactor biosynthesis; thiamine diphosphate biosynthesis. Catalyzes the synthesis of the hydroxymethylpyrimidine phosphate (HMP-P) moiety of thiamine from aminoimidazole ribotide (AIR) in a radical S-adenosyl-L-methionine (SAM)-dependent reaction. In Shewanella amazonensis (strain ATCC BAA-1098 / SB2B), this protein is Phosphomethylpyrimidine synthase.